We begin with the raw amino-acid sequence, 148 residues long: Macrodomain Ter protein (148 aa).

This sequence belongs to the MatP family. Homodimer.

The protein localises to the cytoplasm. Functionally, required for spatial organization of the terminus region of the chromosome (Ter macrodomain) during the cell cycle. Prevents early segregation of duplicated Ter macrodomains during cell division. Binds specifically to matS, which is a 13 bp signature motif repeated within the Ter macrodomain. In Haemophilus influenzae (strain ATCC 51907 / DSM 11121 / KW20 / Rd), this protein is Macrodomain Ter protein.